The following is a 203-amino-acid chain: Dual-action ribosomal maturation protein DarP (203 aa).

Disordered stretches follow at residues 1–31 (MRPM…SKSQ) and 183–203 (GASD…DDEA). Over residues 186 to 203 (DSDDEAAGDAGDDHDDEA) the composition is skewed to acidic residues.

The protein belongs to the DarP family.

The protein localises to the cytoplasm. In terms of biological role, member of a network of 50S ribosomal subunit biogenesis factors which assembles along the 30S-50S interface, preventing incorrect 23S rRNA structures from forming. Promotes peptidyl transferase center (PTC) maturation. The sequence is that of Dual-action ribosomal maturation protein DarP from Burkholderia cenocepacia (strain ATCC BAA-245 / DSM 16553 / LMG 16656 / NCTC 13227 / J2315 / CF5610) (Burkholderia cepacia (strain J2315)).